The following is a 344-amino-acid chain: Arginine N-succinyltransferase (344 aa).

Succinyl-CoA is bound at residue leucine 125. The active-site Proton donor is histidine 229.

Belongs to the arginine N-succinyltransferase family.

It carries out the reaction succinyl-CoA + L-arginine = N(2)-succinyl-L-arginine + CoA + H(+). Its pathway is amino-acid degradation; L-arginine degradation via AST pathway; L-glutamate and succinate from L-arginine: step 1/5. In terms of biological role, catalyzes the transfer of succinyl-CoA to arginine to produce N(2)-succinylarginine. The sequence is that of Arginine N-succinyltransferase from Escherichia coli (strain 55989 / EAEC).